Consider the following 302-residue polypeptide: Oxaloacetate decarboxylase 2 (302 aa).

Ser-50 provides a ligand contact to substrate. Asp-88 contacts Mg(2+). Residues Arg-159 and His-235 each coordinate substrate.

It belongs to the isocitrate lyase/PEP mutase superfamily. Oxaloacetate decarboxylase family. As to quaternary structure, homotetramer; dimer of dimers. It depends on Mg(2+) as a cofactor.

The enzyme catalyses oxaloacetate + H(+) = pyruvate + CO2. Its function is as follows. Catalyzes the decarboxylation of oxaloacetate into pyruvate. Seems to play a role in maintaining cellular concentrations of bicarbonate and pyruvate. The sequence is that of Oxaloacetate decarboxylase 2 from Pseudomonas putida (strain W619).